The chain runs to 173 residues: Crossover junction endodeoxyribonuclease RuvC (173 aa).

Active-site residues include D10, E71, and D143. Mg(2+) contacts are provided by D10, E71, and D143.

The protein belongs to the RuvC family. Homodimer which binds Holliday junction (HJ) DNA. The HJ becomes 2-fold symmetrical on binding to RuvC with unstacked arms; it has a different conformation from HJ DNA in complex with RuvA. In the full resolvosome a probable DNA-RuvA(4)-RuvB(12)-RuvC(2) complex forms which resolves the HJ. The cofactor is Mg(2+).

It is found in the cytoplasm. The catalysed reaction is Endonucleolytic cleavage at a junction such as a reciprocal single-stranded crossover between two homologous DNA duplexes (Holliday junction).. In terms of biological role, the RuvA-RuvB-RuvC complex processes Holliday junction (HJ) DNA during genetic recombination and DNA repair. Endonuclease that resolves HJ intermediates. Cleaves cruciform DNA by making single-stranded nicks across the HJ at symmetrical positions within the homologous arms, yielding a 5'-phosphate and a 3'-hydroxyl group; requires a central core of homology in the junction. The consensus cleavage sequence is 5'-(A/T)TT(C/G)-3'. Cleavage occurs on the 3'-side of the TT dinucleotide at the point of strand exchange. HJ branch migration catalyzed by RuvA-RuvB allows RuvC to scan DNA until it finds its consensus sequence, where it cleaves and resolves the cruciform DNA. This Gloeobacter violaceus (strain ATCC 29082 / PCC 7421) protein is Crossover junction endodeoxyribonuclease RuvC.